We begin with the raw amino-acid sequence, 254 residues long: Dihydroorotate dehydrogenase B (NAD(+)), electron transfer subunit (254 aa).

One can recognise an FAD-binding FR-type domain in the interval 1–99; that stretch reads MLQTEMKVIQ…LGPLGKGFDI (99 aa). Residues 50 to 53, 67 to 69, and 74 to 75 each bind FAD; these read RPIS, LYR, and GT. [2Fe-2S] cluster is bound by residues Cys-218, Cys-223, Cys-226, and Cys-241.

Belongs to the PyrK family. Heterotetramer of 2 PyrK and 2 PyrD type B subunits. The cofactor is [2Fe-2S] cluster. FAD serves as cofactor.

The protein operates within pyrimidine metabolism; UMP biosynthesis via de novo pathway; orotate from (S)-dihydroorotate (NAD(+) route): step 1/1. Functionally, responsible for channeling the electrons from the oxidation of dihydroorotate from the FMN redox center in the PyrD type B subunit to the ultimate electron acceptor NAD(+). This is Dihydroorotate dehydrogenase B (NAD(+)), electron transfer subunit from Listeria monocytogenes serovar 1/2a (strain ATCC BAA-679 / EGD-e).